The following is a 460-amino-acid chain: MYIPCLMCTQHPDSTVKITAGEEVDEAVVAFLAYGCDEVMVDYEGKATPYSQPRDVASKALALGLPLGERFFITPRVPNPRLEDFERSMLSLEAAVLANSYSQRAAGVQAVKWVVLPMTEDVETMAFVYKALDMKARDLAELNAVKRDSSIELIPLVEDAMRQIKIESFIKALFRTAAQSGRILEHMRIFLGISDSAVRHGHMASALAMVKALGQISEINRDGEFKISPIVGMGSPPFRGGLNNPHLAVPEAAQYAGYKTATIQSAVRYDVSYAEYQKVREAILSVYTPRRLHVEEAWITKASELYREAIRPYIGKIAELANAIPSTRDRVSWREYGRVIEGVEWRVPRAIVYTATWYFAGVPPTLLDARFIAWAYKNDLLDDVLRALPATVEEWKFESRFYSRERAEKTLGGEIVKDIDNAFDILGIKPEPDRTYITLLNSADTQPHAIALGRIRGFLG.

Belongs to the PEPCase type 2 family. In terms of assembly, homotetramer. Mg(2+) serves as cofactor.

It carries out the reaction oxaloacetate + phosphate = phosphoenolpyruvate + hydrogencarbonate. Its function is as follows. Catalyzes the irreversible beta-carboxylation of phosphoenolpyruvate (PEP) to form oxaloacetate (OAA), a four-carbon dicarboxylic acid source for the tricarboxylic acid cycle. The chain is Phosphoenolpyruvate carboxylase from Pyrobaculum aerophilum (strain ATCC 51768 / DSM 7523 / JCM 9630 / CIP 104966 / NBRC 100827 / IM2).